Here is a 292-residue protein sequence, read N- to C-terminus: Homoserine kinase (292 aa).

80 to 90 (PLARGLGSSSS) provides a ligand contact to ATP.

The protein belongs to the GHMP kinase family. Homoserine kinase subfamily.

Its subcellular location is the cytoplasm. It catalyses the reaction L-homoserine + ATP = O-phospho-L-homoserine + ADP + H(+). Its pathway is amino-acid biosynthesis; L-threonine biosynthesis; L-threonine from L-aspartate: step 4/5. Its function is as follows. Catalyzes the ATP-dependent phosphorylation of L-homoserine to L-homoserine phosphate. This chain is Homoserine kinase, found in Leuconostoc mesenteroides subsp. mesenteroides (strain ATCC 8293 / DSM 20343 / BCRC 11652 / CCM 1803 / JCM 6124 / NCDO 523 / NBRC 100496 / NCIMB 8023 / NCTC 12954 / NRRL B-1118 / 37Y).